Here is a 201-residue protein sequence, read N- to C-terminus: Holliday junction branch migration complex subunit RuvA (201 aa).

Positions 1–63 (MIEYVRGELA…EDAYVLYGFA (63 aa)) are domain I. Residues 64–142 (DKQEREIFLL…TMGATVAGGS (79 aa)) are domain II. The tract at residues 143–151 (ASAGMLLQS) is flexible linker. The segment at 152-201 (ASVEVQEEAVAALTMLGFAAAPSQKVVLAILKEEPDAPVEKVIKLALKRL) is domain III.

Belongs to the RuvA family. Homotetramer. Forms an RuvA(8)-RuvB(12)-Holliday junction (HJ) complex. HJ DNA is sandwiched between 2 RuvA tetramers; dsDNA enters through RuvA and exits via RuvB. An RuvB hexamer assembles on each DNA strand where it exits the tetramer. Each RuvB hexamer is contacted by two RuvA subunits (via domain III) on 2 adjacent RuvB subunits; this complex drives branch migration. In the full resolvosome a probable DNA-RuvA(4)-RuvB(12)-RuvC(2) complex forms which resolves the HJ.

Its subcellular location is the cytoplasm. In terms of biological role, the RuvA-RuvB-RuvC complex processes Holliday junction (HJ) DNA during genetic recombination and DNA repair, while the RuvA-RuvB complex plays an important role in the rescue of blocked DNA replication forks via replication fork reversal (RFR). RuvA specifically binds to HJ cruciform DNA, conferring on it an open structure. The RuvB hexamer acts as an ATP-dependent pump, pulling dsDNA into and through the RuvAB complex. HJ branch migration allows RuvC to scan DNA until it finds its consensus sequence, where it cleaves and resolves the cruciform DNA. This Bacteroides thetaiotaomicron (strain ATCC 29148 / DSM 2079 / JCM 5827 / CCUG 10774 / NCTC 10582 / VPI-5482 / E50) protein is Holliday junction branch migration complex subunit RuvA.